The following is a 90-amino-acid chain: Cell division protein CrgA (90 aa).

Positions 1 to 25 (MPKARVTKNETAPVSSNPSANRTPV) are disordered. A compositionally biased stretch (polar residues) spans 9–22 (NETAPVSSNPSANR). A run of 2 helical transmembrane segments spans residues 38 to 58 (VIMF…YLVG) and 67 to 87 (LGAW…LMTM).

This sequence belongs to the CrgA family.

It localises to the cell membrane. Its function is as follows. Involved in cell division. This is Cell division protein CrgA from Corynebacterium glutamicum (strain ATCC 13032 / DSM 20300 / JCM 1318 / BCRC 11384 / CCUG 27702 / LMG 3730 / NBRC 12168 / NCIMB 10025 / NRRL B-2784 / 534).